We begin with the raw amino-acid sequence, 153 residues long: UPF0260 protein Plav_0898 (153 aa).

Belongs to the UPF0260 family.

The chain is UPF0260 protein Plav_0898 from Parvibaculum lavamentivorans (strain DS-1 / DSM 13023 / NCIMB 13966).